The chain runs to 411 residues: Multidrug resistance protein MdtH (411 aa).

The next 11 helical transmembrane spans lie at 13-33 (YFLL…FPLI), 45-65 (ALLV…LGIF), 73-95 (LGAK…FMGI), 99-116 (PWLL…GTLF), 139-159 (LLMI…SWLL), 165-185 (LVCL…AWLL), 213-233 (YVFT…ILPI), 243-263 (AAVR…LYPI), 288-308 (IIPI…GIFY), 340-360 (LGLA…YDMG), and 365-385 (IPQL…LGFY).

Belongs to the major facilitator superfamily. DHA1 family. MdtH (TC 2.A.1.2.21) subfamily.

Its subcellular location is the cell membrane. This chain is Multidrug resistance protein MdtH, found in Baumannia cicadellinicola subsp. Homalodisca coagulata.